The sequence spans 506 residues: GTPase Der (506 aa).

EngA-type G domains follow at residues 3-166 (PVVA…GEQL) and 218-391 (IKIA…ACAT). Residues 9–16 (GRPNVGKS), 56–60 (DTGGI), 118–121 (NKTD), 224–231 (GRPNVGKS), 271–275 (DTAGV), and 336–339 (NKWD) contribute to the GTP site. Residues 392 to 476 (QKTSTSMLTR…PIRIQFQEGN (85 aa)) form the KH-like domain.

Belongs to the TRAFAC class TrmE-Era-EngA-EngB-Septin-like GTPase superfamily. EngA (Der) GTPase family. In terms of assembly, associates with the 50S ribosomal subunit.

GTPase that plays an essential role in the late steps of ribosome biogenesis. The polypeptide is GTPase Der (Actinobacillus pleuropneumoniae serotype 3 (strain JL03)).